Here is a 234-residue protein sequence, read N- to C-terminus: Membrane glycoprotein RL11 (234 aa).

Positions methionine 1–glycine 23 are cleaved as a signal peptide. Residues leucine 183–leucine 203 form a helical membrane-spanning segment.

It localises to the host membrane. The chain is Membrane glycoprotein RL11 (RL11) from Human cytomegalovirus (strain Merlin) (HHV-5).